The following is a 154-amino-acid chain: Bacterial ferritin (154 aa).

The Ferritin-like diiron domain occupies 1–145; sequence MQGHPEVIDY…QQLGLIARMG (145 aa). 9 residues coordinate Fe(3+): Glu18, His46, Glu47, Glu50, Glu51, His54, Glu93, Asp129, and His130.

This sequence belongs to the bacterioferritin family. The bacterioferritin (BFR) complex is formed of 24 subunits (FtnA and BfrB) arranged as 12 homodimers. The holocomplex contains about 8.7% Fe and 8.0% phosphate. In vivo purifies with BfrB in varying ratios, depending on the O(2) content; as O(2) decreases FtnA content rises. Pure FtnA BFR complexes are not isolated in situ, although in a bfrB deletion some iron will accumulate in FtnA ferritin complexes. Upon crystallization forms homooligomers of 24 subunits, the BFR complex, arranged as 12 dimers, that are packed together to form an approximately spherical molecule with a central cavity, in which large amounts of iron can be deposited. The BFR shell has three- and four-fold pores; Fe(2+) may move in and out of the shell via the four-fold pores. Does not interact with Bfd.

It localises to the cytoplasm. The enzyme catalyses 4 Fe(2+) + O2 + 4 H(+) = 4 Fe(3+) + 2 H2O. It carries out the reaction Fe(2+)(in) = Fe(2+)(out). Plays a role in catalase A (katA) expression; activity is required for optimal KatA activity and resistance to H(2)O(2). Iron-storage protein that is part of the heterooligomeric bacterioferritin (BFR) complex. The ferroxidase center binds Fe(2+), oxidizes it using dioxygen to Fe(3+), and participates in subsequent Fe(3+) oxide mineral core formation within the central cavity of the BFR protein shell. Can store up to 520 iron atoms per ferritin protein molecule. Iron release requires only the input of electrons from ferredoxin NADP reductase (FPR), does not require Bfd. Does not bind heme. This is Bacterial ferritin from Pseudomonas aeruginosa (strain ATCC 15692 / DSM 22644 / CIP 104116 / JCM 14847 / LMG 12228 / 1C / PRS 101 / PAO1).